The following is a 458-amino-acid chain: GDP-fucose protein O-fucosyltransferase 3 (458 aa).

Residues 1-11 lie on the Cytoplasmic side of the membrane; the sequence is MRRISVKKLCS. Residues 12–32 form a helical; Signal-anchor for type II membrane protein membrane-spanning segment; that stretch reads FCLCACAFAFLVMTFQVIELL. Over 33–458 the chain is Lumenal; sequence GQFEQTEHRQ…TQFWREVFTD (426 aa). N-linked (GlcNAc...) asparagine glycans are attached at residues asparagine 92, asparagine 150, and asparagine 300. Cysteine 371 and cysteine 374 are disulfide-bonded. The N-linked (GlcNAc...) asparagine glycan is linked to asparagine 445.

Belongs to the glycosyltransferase 10 family.

The protein localises to the endoplasmic reticulum membrane. It carries out the reaction L-threonyl-[protein] + GDP-beta-L-fucose = 3-O-(alpha-L-fucosyl)-L-threonyl-[protein] + GDP + H(+). The enzyme catalyses L-seryl-[protein] + GDP-beta-L-fucose = 3-O-(alpha-L-fucosyl)-L-seryl-[protein] + GDP + H(+). Its pathway is protein modification; protein glycosylation. Its function is as follows. Protein O-fucosyltransferase that specifically catalyzes O-fucosylation of serine or threonine residues in EMI domains of target proteins. Attaches fucose through an O-glycosidic linkage. O-fucosylation of EMI domain-containing proteins may be required for facilitating protein folding and secretion. This Danio rerio (Zebrafish) protein is GDP-fucose protein O-fucosyltransferase 3 (fut10).